A 104-amino-acid chain; its full sequence is Phosphocarrier protein HPr (104 aa).

An HPr domain is found at 17–104; the sequence is ELSAIFMIRN…EVFNSGFGEL (88 aa). The Pros-phosphohistidine intermediate role is filled by histidine 31.

Belongs to the HPr family.

It localises to the cytoplasm. General (non sugar-specific) component of the phosphoenolpyruvate-dependent sugar phosphotransferase system (sugar PTS). This major carbohydrate active-transport system catalyzes the phosphorylation of incoming sugar substrates concomitantly with their translocation across the cell membrane. The phosphoryl group from phosphoenolpyruvate (PEP) is transferred to the phosphoryl carrier protein HPr by enzyme I. Phospho-HPr then transfers it to the PTS EIIA domain. This Chlamydia muridarum (strain MoPn / Nigg) protein is Phosphocarrier protein HPr (ptsH).